The sequence spans 264 residues: Hydroxyethylthiazole kinase (264 aa).

Residue Met43 coordinates substrate. Lys119 and Ser165 together coordinate ATP. Gly192 provides a ligand contact to substrate.

It belongs to the Thz kinase family. The cofactor is Mg(2+).

It catalyses the reaction 5-(2-hydroxyethyl)-4-methylthiazole + ATP = 4-methyl-5-(2-phosphooxyethyl)-thiazole + ADP + H(+). It functions in the pathway cofactor biosynthesis; thiamine diphosphate biosynthesis; 4-methyl-5-(2-phosphoethyl)-thiazole from 5-(2-hydroxyethyl)-4-methylthiazole: step 1/1. Its function is as follows. Catalyzes the phosphorylation of the hydroxyl group of 4-methyl-5-beta-hydroxyethylthiazole (THZ). The polypeptide is Hydroxyethylthiazole kinase (Methanocorpusculum labreanum (strain ATCC 43576 / DSM 4855 / Z)).